Reading from the N-terminus, the 436-residue chain is Putative UDP-arabinose 4-epimerase 4 (436 aa).

The disordered stretch occupies residues 1–20 (MLNSSGVRTQRRSPRPLSLG). The Cytoplasmic segment spans residues 1–60 (MLNSSGVRTQRRSPRPLSLGGRKIITPTKFAYDHHNPDKVLDFVEMDCLEPKTKNNLTGK). A helical; Signal-anchor for type II membrane protein transmembrane segment spans residues 61 to 81 (LLLVASLLILAIIVISQSSSF). Topologically, residues 82–436 (TSPSAFSQRE…KIHPHGYNSY (355 aa)) are lumenal. Position 96 to 127 (96 to 127 (HVLVTGGAGYIGSHAALRLLRDSYRVTIVDNL)) interacts with NAD(+). The Proton acceptor role is filled by Tyr-244.

It belongs to the NAD(P)-dependent epimerase/dehydratase family. NAD(+) is required as a cofactor.

It is found in the golgi apparatus. The protein localises to the golgi stack membrane. It catalyses the reaction UDP-beta-L-arabinopyranose = UDP-alpha-D-xylose. Its pathway is nucleotide-sugar biosynthesis; UDP-L-arabinose biosynthesis; UDP-L-arabinose from UDP-alpha-D-xylose: step 1/1. The protein operates within cell wall biogenesis; cell wall polysaccharide biosynthesis. The polypeptide is Putative UDP-arabinose 4-epimerase 4 (Arabidopsis thaliana (Mouse-ear cress)).